Reading from the N-terminus, the 548-residue chain is Pentatricopeptide repeat-containing protein At1g62680, mitochondrial (548 aa).

The N-terminal 43 residues, 1–43 (MQRSIAMTAKRFLHRNLLENGKPRTASSPSFSHCSSCRCWVRA), are a transit peptide targeting the mitochondrion. PPR repeat units follow at residues 84–118 (SIVD…GIRN), 119–153 (DLYT…GYEP), 154–188 (DRVT…GYKP), 189–223 (DIVA…GIRP), 224–258 (NVVT…KITP), 259–293 (NVIT…SIDP), 294–328 (DIVT…GCLA), 329–363 (DVVS…GLVS), 364–398 (NTVT…GISP), 399–433 (DIWT…EMDL), 434–468 (DIVT…GLKP), and 469–503 (DIVT…GLMK).

The protein belongs to the PPR family. P subfamily.

The protein resides in the mitochondrion. This Arabidopsis thaliana (Mouse-ear cress) protein is Pentatricopeptide repeat-containing protein At1g62680, mitochondrial.